Here is a 348-residue protein sequence, read N- to C-terminus: VIP36-like protein (348 aa).

The N-terminal stretch at 1–44 (MAATLGPLGSWQQWRRCLSARDGSRMLLLLLLLGSGQGPQQVGA) is a signal peptide. Residues 45-313 (GQTFEYLKRE…APLPPLSGLA (269 aa)) lie on the Lumenal side of the membrane. An L-type lectin-like domain is found at 49–274 (EYLKREHSLS…DVISLKLFEL (226 aa)). S93 and D128 together coordinate a carbohydrate. 3 residues coordinate Ca(2+): D159, Y161, and N163. 161–163 (YPN) is a binding site for a carbohydrate. The N-linked (GlcNAc...) (high mannose) asparagine glycan is linked to N181. H188 lines the a carbohydrate pocket. A Ca(2+)-binding site is contributed by D191. A disulfide bond links C200 and C237. An a carbohydrate-binding site is contributed by 258–260 (GDL). The chain crosses the membrane as a helical span at residues 314–336 (LFLIVFFSLVFSVFAIVIGIILY). At 337–348 (NKWQEQSRKRFY) the chain is on the cytoplasmic side. Residues 344–346 (RKR) carry the Endoplasmic reticulum retention signal motif.

Expressed in numerous tissues. Highest expression in skeletal muscle and kidney, intermediate levels in heart, liver and placenta, low levels in brain, thymus, spleen, small intestine and lung.

It localises to the endoplasmic reticulum membrane. Its subcellular location is the golgi apparatus membrane. May be involved in the regulation of export from the endoplasmic reticulum of a subset of glycoproteins. May function as a regulator of ERGIC-53. The chain is VIP36-like protein (LMAN2L) from Homo sapiens (Human).